We begin with the raw amino-acid sequence, 671 residues long: tRNA 5-methylaminomethyl-2-thiouridine biosynthesis bifunctional protein MnmC (671 aa).

The tract at residues 1-245 (MVNVMNTLSF…KREMLWGEKP (245 aa)) is tRNA (mnm(5)s(2)U34)-methyltransferase. The segment at 272–671 (VGGGVASLFV…RKLLKGSKVE (400 aa)) is FAD-dependent cmnm(5)s(2)U34 oxidoreductase.

The protein in the N-terminal section; belongs to the methyltransferase superfamily. tRNA (mnm(5)s(2)U34)-methyltransferase family. This sequence in the C-terminal section; belongs to the DAO family. FAD is required as a cofactor.

The protein resides in the cytoplasm. It catalyses the reaction 5-aminomethyl-2-thiouridine(34) in tRNA + S-adenosyl-L-methionine = 5-methylaminomethyl-2-thiouridine(34) in tRNA + S-adenosyl-L-homocysteine + H(+). Functionally, catalyzes the last two steps in the biosynthesis of 5-methylaminomethyl-2-thiouridine (mnm(5)s(2)U) at the wobble position (U34) in tRNA. Catalyzes the FAD-dependent demodification of cmnm(5)s(2)U34 to nm(5)s(2)U34, followed by the transfer of a methyl group from S-adenosyl-L-methionine to nm(5)s(2)U34, to form mnm(5)s(2)U34. This chain is tRNA 5-methylaminomethyl-2-thiouridine biosynthesis bifunctional protein MnmC, found in Actinobacillus pleuropneumoniae serotype 5b (strain L20).